The following is a 281-amino-acid chain: uncharacterized protein (281 aa).

A coiled-coil region spans residues 242 to 281 (IDKQSRKKNIIREINDIKSKINDLSNYMDNLISELDDLFD).

This is an uncharacterized protein from Acanthamoeba polyphaga (Amoeba).